The primary structure comprises 130 residues: Small ribosomal subunit protein uS9 (130 aa).

A disordered region spans residues 111 to 130 (VERKKVGLRKARRRPQFSKR). Residues 116-130 (VGLRKARRRPQFSKR) show a composition bias toward basic residues.

Belongs to the universal ribosomal protein uS9 family.

The polypeptide is Small ribosomal subunit protein uS9 (Enterobacter sp. (strain 638)).